The following is a 188-amino-acid chain: Elongation factor P (188 aa).

The residue at position 34 (lysine 34) is an N6-(3,6-diaminohexanoyl)-5-hydroxylysine.

The protein belongs to the elongation factor P family. Post-translationally, is beta-lysylated on the epsilon-amino group of Lys-34 by the combined action of EpmA and EpmB, and then hydroxylated on the C5 position of the same residue by EpmC. Lysylation is critical for the stimulatory effect of EF-P on peptide-bond formation. The lysylation moiety would extend toward the peptidyltransferase center and stabilize the terminal 3-CCA end of the tRNA. The hydroxylation of the C5 position on Lys-34 would allow additional potential stabilizing hydrogen-bond interactions with the P-tRNA.

It is found in the cytoplasm. It participates in protein biosynthesis; polypeptide chain elongation. Involved in peptide bond synthesis. Alleviates ribosome stalling that occurs when 3 or more consecutive Pro residues or the sequence PPG is present in a protein, possibly by augmenting the peptidyl transferase activity of the ribosome. Modification of Lys-34 is required for alleviation. The chain is Elongation factor P from Salmonella arizonae (strain ATCC BAA-731 / CDC346-86 / RSK2980).